The following is an 89-amino-acid chain: Small ribosomal subunit protein uS15 (89 aa).

It belongs to the universal ribosomal protein uS15 family. Part of the 30S ribosomal subunit. Forms a bridge to the 50S subunit in the 70S ribosome, contacting the 23S rRNA.

In terms of biological role, one of the primary rRNA binding proteins, it binds directly to 16S rRNA where it helps nucleate assembly of the platform of the 30S subunit by binding and bridging several RNA helices of the 16S rRNA. Functionally, forms an intersubunit bridge (bridge B4) with the 23S rRNA of the 50S subunit in the ribosome. This Dictyoglomus thermophilum (strain ATCC 35947 / DSM 3960 / H-6-12) protein is Small ribosomal subunit protein uS15.